A 185-amino-acid chain; its full sequence is Acireductone dioxygenase (185 aa).

The segment at 1 to 22 is disordered; the sequence is MSRLSIHPEGSTNATSPAEPLL. Residues His-102, His-104, Glu-108, and His-146 each coordinate Fe(2+). Ni(2+)-binding residues include His-102, His-104, Glu-108, and His-146.

Belongs to the acireductone dioxygenase (ARD) family. In terms of assembly, monomer. Requires Fe(2+) as cofactor. Ni(2+) is required as a cofactor.

The catalysed reaction is 1,2-dihydroxy-5-(methylsulfanyl)pent-1-en-3-one + O2 = 3-(methylsulfanyl)propanoate + CO + formate + 2 H(+). It carries out the reaction 1,2-dihydroxy-5-(methylsulfanyl)pent-1-en-3-one + O2 = 4-methylsulfanyl-2-oxobutanoate + formate + 2 H(+). It functions in the pathway amino-acid biosynthesis; L-methionine biosynthesis via salvage pathway; L-methionine from S-methyl-5-thio-alpha-D-ribose 1-phosphate: step 5/6. Functionally, catalyzes 2 different reactions between oxygen and the acireductone 1,2-dihydroxy-3-keto-5-methylthiopentene (DHK-MTPene) depending upon the metal bound in the active site. Fe-containing acireductone dioxygenase (Fe-ARD) produces formate and 2-keto-4-methylthiobutyrate (KMTB), the alpha-ketoacid precursor of methionine in the methionine recycle pathway. Ni-containing acireductone dioxygenase (Ni-ARD) produces methylthiopropionate, carbon monoxide and formate, and does not lie on the methionine recycle pathway. The polypeptide is Acireductone dioxygenase (Prochlorococcus marinus (strain MIT 9313)).